The sequence spans 515 residues: Galactose-1-phosphate uridylyltransferase (515 aa).

It belongs to the galactose-1-phosphate uridylyltransferase type 2 family.

The protein resides in the cytoplasm. The catalysed reaction is alpha-D-galactose 1-phosphate + UDP-alpha-D-glucose = alpha-D-glucose 1-phosphate + UDP-alpha-D-galactose. It participates in carbohydrate metabolism; galactose metabolism. Its function is as follows. Transfers the UMP unit from UDP-glucose (UDP-Glc) to Gal1P. Can also transfer the UMP unit to GlcNAc1P and GalNAc1P. Involved in the general galactose metabolism, and also involved in the lacto-N-biose I/galacto-N-biose (LNB/GNB) degradation pathway, which is important for host intestinal colonization by bifidobacteria. In Bifidobacterium longum subsp. longum (strain ATCC 15707 / DSM 20219 / JCM 1217 / NCTC 11818 / E194b), this protein is Galactose-1-phosphate uridylyltransferase.